Reading from the N-terminus, the 314-residue chain is MLAVFGHLNPDTDAISAAMVYARLLTRQGTEAQAYRLGEPNFETAYVLRELGLEAPPLLTELPAGSKVALVDHNESAQSLPALGELDVTRVVDHHKLGDLTTINPPYLRFEPVGCTGTILLKLHREAGLSVEPQDAKLMLSAILSDTLHFRSPTTTQDDRDAVAFLAPVAGVNDVEAYALAMFAAKSDLGNTPAETLLRMDYKVFPFGDPVQPQNWGIGVIETTNPAYVFGRQQELLAAMDQVKAEDTLSGMLLSVVDILNETNRTLVLGATEAKVLREAFGAEAEGQVADLGNRISRKKQIVPTLEKYFAPEA.

6 residues coordinate Mn(2+): His-7, Asp-11, Asp-13, Asp-72, His-94, and Asp-146.

Belongs to the PPase class C family. The cofactor is Mn(2+).

It localises to the cytoplasm. The enzyme catalyses diphosphate + H2O = 2 phosphate + H(+). The sequence is that of Probable manganese-dependent inorganic pyrophosphatase (ppaC) from Deinococcus radiodurans (strain ATCC 13939 / DSM 20539 / JCM 16871 / CCUG 27074 / LMG 4051 / NBRC 15346 / NCIMB 9279 / VKM B-1422 / R1).